We begin with the raw amino-acid sequence, 862 residues long: Eukaryotic translation initiation factor 3 subunit C (862 aa).

The disordered stretch occupies residues 1 to 81; the sequence is MSSRFFYGGG…EEEEKVTVVK (81 aa). A compositionally biased stretch (acidic residues) spans 17–54; sequence SSDEEELYSDREEEEKSEEEESSEEEDETSEEEESDEE. Over residues 55-65 the composition is skewed to basic and acidic residues; sequence TGARKFLKDVA. The span at 66–75 shows a compositional bias: acidic residues; sequence SDSEEEEEEE. The 175-residue stretch at 600-774 folds into the PCI domain; it reads FHMHINLELL…NAIVFRKGVE (175 aa). Residues 813–862 are disordered; it reads RDQGAGARGGRGSGRGGQARGGPRFPGGQQGRRPGGQQFGGGALGGAIKA. A compositionally biased stretch (gly residues) spans 818-862; that stretch reads GARGGRGSGRGGQARGGPRFPGGQQGRRPGGQQFGGGALGGAIKA.

The protein belongs to the eIF-3 subunit C family. In terms of assembly, component of the eukaryotic translation initiation factor 3 (eIF-3) complex.

It is found in the cytoplasm. Component of the eukaryotic translation initiation factor 3 (eIF-3) complex, which is involved in protein synthesis of a specialized repertoire of mRNAs and, together with other initiation factors, stimulates binding of mRNA and methionyl-tRNAi to the 40S ribosome. The eIF-3 complex specifically targets and initiates translation of a subset of mRNAs involved in cell proliferation. The polypeptide is Eukaryotic translation initiation factor 3 subunit C (nip1) (Aspergillus fumigatus (strain CBS 144.89 / FGSC A1163 / CEA10) (Neosartorya fumigata)).